Reading from the N-terminus, the 91-residue chain is Large ribosomal subunit protein uL22 (91 aa).

The protein belongs to the universal ribosomal protein uL22 family. Part of the 50S ribosomal subunit.

In terms of biological role, this protein binds specifically to 23S rRNA; its binding is stimulated by other ribosomal proteins, e.g. L4, L17, and L20. It is important during the early stages of 50S assembly. It makes multiple contacts with different domains of the 23S rRNA in the assembled 50S subunit and ribosome. Its function is as follows. The globular domain of the protein is located near the polypeptide exit tunnel on the outside of the subunit, while an extended beta-hairpin is found that lines the wall of the exit tunnel in the center of the 70S ribosome. This Loofah witches'-broom phytoplasma protein is Large ribosomal subunit protein uL22 (rplV).